The sequence spans 428 residues: Serine--tRNA ligase (428 aa).

Thr235–Glu237 contributes to the L-serine binding site. ATP is bound at residue Arg266 to Glu268. Glu289 serves as a coordination point for L-serine. Glu353–Ser356 is an ATP binding site. Ser389 contributes to the L-serine binding site.

It belongs to the class-II aminoacyl-tRNA synthetase family. Type-1 seryl-tRNA synthetase subfamily. As to quaternary structure, homodimer. The tRNA molecule binds across the dimer.

The protein localises to the cytoplasm. The catalysed reaction is tRNA(Ser) + L-serine + ATP = L-seryl-tRNA(Ser) + AMP + diphosphate + H(+). It carries out the reaction tRNA(Sec) + L-serine + ATP = L-seryl-tRNA(Sec) + AMP + diphosphate + H(+). It functions in the pathway aminoacyl-tRNA biosynthesis; selenocysteinyl-tRNA(Sec) biosynthesis; L-seryl-tRNA(Sec) from L-serine and tRNA(Sec): step 1/1. Catalyzes the attachment of serine to tRNA(Ser). Is also able to aminoacylate tRNA(Sec) with serine, to form the misacylated tRNA L-seryl-tRNA(Sec), which will be further converted into selenocysteinyl-tRNA(Sec). This Pasteurella multocida (strain Pm70) protein is Serine--tRNA ligase.